We begin with the raw amino-acid sequence, 142 residues long: Large ribosomal subunit protein bL17 (142 aa).

This sequence belongs to the bacterial ribosomal protein bL17 family. In terms of assembly, part of the 50S ribosomal subunit. Contacts protein L32.

The sequence is that of Large ribosomal subunit protein bL17 from Bartonella henselae (strain ATCC 49882 / DSM 28221 / CCUG 30454 / Houston 1) (Rochalimaea henselae).